Reading from the N-terminus, the 437-residue chain is Glutamate-1-semialdehyde 2,1-aminomutase (437 aa).

Lys-273 bears the N6-(pyridoxal phosphate)lysine mark.

Belongs to the class-III pyridoxal-phosphate-dependent aminotransferase family. HemL subfamily. As to quaternary structure, homodimer. It depends on pyridoxal 5'-phosphate as a cofactor.

It localises to the cytoplasm. The catalysed reaction is (S)-4-amino-5-oxopentanoate = 5-aminolevulinate. It participates in porphyrin-containing compound metabolism; protoporphyrin-IX biosynthesis; 5-aminolevulinate from L-glutamyl-tRNA(Glu): step 2/2. This is Glutamate-1-semialdehyde 2,1-aminomutase from Chlamydia abortus (strain DSM 27085 / S26/3) (Chlamydophila abortus).